The sequence spans 139 residues: Small ribosomal subunit protein uS12 (139 aa).

2 disordered regions span residues 1-22 and 37-57; these read MPTINQLVRKGRKSHKGKSKSP and KTPSPQKRGVATRVGTMTPKK. A compositionally biased stretch (basic residues) spans 9–19; it reads RKGRKSHKGKS. 3-methylthioaspartic acid is present on Asp-102.

This sequence belongs to the universal ribosomal protein uS12 family. In terms of assembly, part of the 30S ribosomal subunit. Contacts proteins S8 and S17. May interact with IF1 in the 30S initiation complex.

With S4 and S5 plays an important role in translational accuracy. Its function is as follows. Interacts with and stabilizes bases of the 16S rRNA that are involved in tRNA selection in the A site and with the mRNA backbone. Located at the interface of the 30S and 50S subunits, it traverses the body of the 30S subunit contacting proteins on the other side and probably holding the rRNA structure together. The combined cluster of proteins S8, S12 and S17 appears to hold together the shoulder and platform of the 30S subunit. The sequence is that of Small ribosomal subunit protein uS12 from Limosilactobacillus reuteri (strain DSM 20016) (Lactobacillus reuteri).